The primary structure comprises 325 residues: Hydroxymethylglutaryl-CoA lyase, mitochondrial (325 aa).

A mitochondrion-targeting transit peptide spans 1 to 27; it reads MAAMTKALPRRLVGLASLRAVSTSSMD. The Pyruvate carboxyltransferase domain occupies 33–300; sequence VKIVEVGPRD…HTGVNLQKLL (268 aa). Substrate is bound at residue R41. D42 is a binding site for a divalent metal cation. The residue at position 48 (K48) is an N6-acetyllysine; alternate. K48 carries the N6-succinyllysine; alternate modification. K111 bears the N6-acetyllysine mark. An N6-acetyllysine; alternate mark is found at K137 and K179. 2 positions are modified to N6-succinyllysine; alternate: K137 and K179. A divalent metal cation contacts are provided by H233 and H235. The active site involves C266. An a divalent metal cation-binding site is contributed by N275. A Microbody targeting signal motif is present at residues 323–325; it reads CKL. K324 carries the N6-acetyllysine modification.

Belongs to the HMG-CoA lyase family. In terms of assembly, homodimer; disulfide-linked. Can also form homotetramers.

It is found in the mitochondrion matrix. Its subcellular location is the peroxisome. It catalyses the reaction (3S)-3-hydroxy-3-methylglutaryl-CoA = acetoacetate + acetyl-CoA. Its pathway is metabolic intermediate metabolism; (S)-3-hydroxy-3-methylglutaryl-CoA degradation; acetoacetate from (S)-3-hydroxy-3-methylglutaryl-CoA: step 1/1. Functionally, mitochondrial 3-hydroxy-3-methylglutaryl-CoA lyase that catalyzes a cation-dependent cleavage of (S)-3-hydroxy-3-methylglutaryl-CoA into acetyl-CoA and acetoacetate, a key step in ketogenesis. Terminal step in leucine catabolism. Ketone bodies (beta-hydroxybutyrate, acetoacetate and acetone) are essential as an alternative source of energy to glucose, as lipid precursors and as regulators of metabolism. In Macaca fascicularis (Crab-eating macaque), this protein is Hydroxymethylglutaryl-CoA lyase, mitochondrial (HMGCL).